The primary structure comprises 543 residues: Excitatory amino acid transporter 1 (543 aa).

The Cytoplasmic segment spans residues 1 to 47 (MTKSNGEEPRMGSRMERFQQGVRKRTLLAKKKVQNITKEDVKSYLFR). The helical transmembrane segment at 48-68 (NAFVLLTVSAVIVGTILGFAL) threads the bilayer. At 69-86 (RPYKMSYREVKYFSFPGE) the chain is on the extracellular side. The helical transmembrane segment at 87–108 (LLMRMLQMLVLPLIISSLVTGM) threads the bilayer. Over 109–122 (AALDSKASGKMGMR) the chain is Cytoplasmic. Residues 123–145 (AVVYYMTTTIIAVVIGIIIVIII) form a helical membrane-spanning segment. Topologically, residues 146–236 (HPGKGTKENM…IREEMVPVPG (91 aa)) are extracellular. Residues 237-260 (SVNGVNALGLVVFSMCFGFVIGNM) form a helical membrane-spanning segment. The Cytoplasmic portion of the chain corresponds to 261–269 (KEQGQALRE). Residues 270–297 (FFDSLNEAIMRLVAVIMWYAPLGILFLI) form a helical membrane-spanning segment. Over 298 to 318 (AGKILEMEDMGVIGGQLAMYT) the chain is Extracellular. A helical transmembrane segment spans residues 319–340 (VTVIVGLLIHAVIVLPLLYFLV). Topologically, residues 341-345 (TRKNP) are cytoplasmic. Positions 346-376 (WVFIGGLLQALITALGTSSSSATLPITFKCL) form an intramembrane region, discontinuously helical. 363–365 (SSS) is a binding site for L-aspartate. At 377-385 (EENNGVDKR) the chain is on the cytoplasmic side. A helical membrane pass occupies residues 386–412 (ITRFVLPVGATINMDGTALYEALAAIF). Residues Gly-394, Thr-396, and Asn-398 each coordinate Na(+). Thr-402 lines the L-aspartate pocket. Topologically, residues 413-425 (IAQVNNFDLNFGQ) are extracellular. Residues 426–459 (IITISITATAASIGAAGIPQAGLVTMVIVLTSVG) constitute an intramembrane region (discontinuously helical). 443–447 (IPQAG) contributes to the L-aspartate binding site. Topologically, residues 460–472 (LPTDDITLIIAVD) are extracellular. Residues 473 to 494 (WFLDRLRTTTNVLGDSLGAGIV) form a helical membrane-spanning segment. Positions 476 and 483 each coordinate L-aspartate. Positions 483 and 487 each coordinate Na(+). Topologically, residues 495–543 (EHLSRHELKNRDVEMGNSVIEENEMKKPYQLIAQDNEPEKPVADSETKM) are cytoplasmic. A Phosphoserine modification is found at Ser-512. The segment at 522-543 (PYQLIAQDNEPEKPVADSETKM) is disordered. Residues 531–543 (EPEKPVADSETKM) are compositionally biased toward basic and acidic residues.

The protein belongs to the dicarboxylate/amino acid:cation symporter (DAACS) (TC 2.A.23) family. SLC1A3 subfamily. In terms of assembly, homotrimer. Post-translationally, glycosylated. In terms of tissue distribution, detected in brain and cerebellum. Both isoform GLAST-1 and GLAST-1A are expressed in bone and brain. In brain isoform GLAST-1 is highly enriched in the Purkinje cell layer in cerebellum.

The protein localises to the cell membrane. It carries out the reaction K(+)(in) + L-glutamate(out) + 3 Na(+)(out) + H(+)(out) = K(+)(out) + L-glutamate(in) + 3 Na(+)(in) + H(+)(in). The enzyme catalyses K(+)(in) + L-aspartate(out) + 3 Na(+)(out) + H(+)(out) = K(+)(out) + L-aspartate(in) + 3 Na(+)(in) + H(+)(in). The catalysed reaction is D-aspartate(out) + K(+)(in) + 3 Na(+)(out) + H(+)(out) = D-aspartate(in) + K(+)(out) + 3 Na(+)(in) + H(+)(in). Its function is as follows. Sodium-dependent, high-affinity amino acid transporter that mediates the uptake of L-glutamate and also L-aspartate and D-aspartate. Functions as a symporter that transports one amino acid molecule together with two or three Na(+) ions and one proton, in parallel with the counter-transport of one K(+) ion. Plays a redundant role in the rapid removal of released glutamate from the synaptic cleft, which is essential for terminating the postsynaptic action of glutamate. This Rattus norvegicus (Rat) protein is Excitatory amino acid transporter 1 (Slc1a3).